The primary structure comprises 98 residues: MTPTYMNIMLAFTISLLGMLIYRSHLMASLLCLEGMMMSLFIMTTLIALNTRSPLINIMPIILLVFAACEAAVGLALLVSISNTYGLDYIHNLNLLQC.

3 consecutive transmembrane segments (helical) span residues 1–21 (MTPT…GMLI), 29–49 (SLLC…LIAL), and 61–81 (IILL…LVSI).

Belongs to the complex I subunit 4L family. As to quaternary structure, core subunit of respiratory chain NADH dehydrogenase (Complex I) which is composed of 45 different subunits.

The protein resides in the mitochondrion inner membrane. It carries out the reaction a ubiquinone + NADH + 5 H(+)(in) = a ubiquinol + NAD(+) + 4 H(+)(out). Its function is as follows. Core subunit of the mitochondrial membrane respiratory chain NADH dehydrogenase (Complex I) which catalyzes electron transfer from NADH through the respiratory chain, using ubiquinone as an electron acceptor. Part of the enzyme membrane arm which is embedded in the lipid bilayer and involved in proton translocation. The protein is NADH-ubiquinone oxidoreductase chain 4L (MT-ND4L) of Macaca maura (Moor macaque).